Reading from the N-terminus, the 152-residue chain is Arginine repressor (152 aa).

It belongs to the ArgR family.

The protein resides in the cytoplasm. It functions in the pathway amino-acid biosynthesis; L-arginine biosynthesis [regulation]. Functionally, regulates arginine biosynthesis genes. In Lactiplantibacillus plantarum (strain ATCC BAA-793 / NCIMB 8826 / WCFS1) (Lactobacillus plantarum), this protein is Arginine repressor.